The primary structure comprises 622 residues: Membrane protein insertase YidC (622 aa).

The helical transmembrane segment at 6-26 (IVLLIIFSTSLLFLWDAWVKE) threads the bilayer. The tract at residues 47–87 (TQSKNNDGLPIPGSELTASQTGSDLNGIPSSGDTADSVTPR) is disordered. The span at 62–83 (LTASQTGSDLNGIPSSGDTADS) shows a compositional bias: polar residues. The next 3 helical transmembrane spans lie at 381 to 401 (WGIAIILLTITVKLLFFPLSA), 451 to 471 (FPILVQIPVFIALYWTILAAV), and 525 to 545 (PVAFSAIFFFFPAGLVLYSLV). Residues 563–622 (TAPSQDAPESPASKDAPELPVSNQVINDSENTEAPASGPADSPKKPVNIPRRMHKRTRKK) are disordered. The segment covering 583–596 (VSNQVINDSENTEA) has biased composition (polar residues). Positions 613-622 (RRMHKRTRKK) are enriched in basic residues.

This sequence belongs to the OXA1/ALB3/YidC family. Type 1 subfamily. In terms of assembly, interacts with the Sec translocase complex via SecD. Specifically interacts with transmembrane segments of nascent integral membrane proteins during membrane integration.

It localises to the cell inner membrane. Its function is as follows. Required for the insertion and/or proper folding and/or complex formation of integral membrane proteins into the membrane. Involved in integration of membrane proteins that insert both dependently and independently of the Sec translocase complex, as well as at least some lipoproteins. Aids folding of multispanning membrane proteins. This Nitrosomonas eutropha (strain DSM 101675 / C91 / Nm57) protein is Membrane protein insertase YidC.